Here is a 389-residue protein sequence, read N- to C-terminus: Phospho-N-acetylmuramoyl-pentapeptide-transferase (389 aa).

The next 10 helical transmembrane spans lie at 25–45, 74–94, 97–117, 134–154, 190–210, 222–242, 259–279, 286–306, 311–331, and 366–386; these read RAVM…PWVI, MGGV…CDWG, FIWV…VDDY, FFWQ…SVSE, VSYP…IVGS, GLVI…AYVM, AGEL…FLWF, VFMG…VAVI, IVLF…MLQV, and QVTV…LSTL.

This sequence belongs to the glycosyltransferase 4 family. MraY subfamily. It depends on Mg(2+) as a cofactor.

It is found in the cell inner membrane. The catalysed reaction is UDP-N-acetyl-alpha-D-muramoyl-L-alanyl-gamma-D-glutamyl-meso-2,6-diaminopimeloyl-D-alanyl-D-alanine + di-trans,octa-cis-undecaprenyl phosphate = di-trans,octa-cis-undecaprenyl diphospho-N-acetyl-alpha-D-muramoyl-L-alanyl-D-glutamyl-meso-2,6-diaminopimeloyl-D-alanyl-D-alanine + UMP. The protein operates within cell wall biogenesis; peptidoglycan biosynthesis. Catalyzes the initial step of the lipid cycle reactions in the biosynthesis of the cell wall peptidoglycan: transfers peptidoglycan precursor phospho-MurNAc-pentapeptide from UDP-MurNAc-pentapeptide onto the lipid carrier undecaprenyl phosphate, yielding undecaprenyl-pyrophosphoryl-MurNAc-pentapeptide, known as lipid I. The protein is Phospho-N-acetylmuramoyl-pentapeptide-transferase of Cupriavidus pinatubonensis (strain JMP 134 / LMG 1197) (Cupriavidus necator (strain JMP 134)).